The primary structure comprises 648 residues: Golgin subfamily A member 8G (648 aa).

The span at 1–11 shows a compositional bias: pro residues; sequence MWPQARLPPHP. 2 disordered regions span residues 1–84 and 119–139; these read MWPQ…SATL and NKQVEHQLEEEKKANNEKQKA. Residues 50–62 show a composition bias toward polar residues; it reads TNGSIHETATSGG. 3 coiled-coil regions span residues 105 to 160, 223 to 275, and 318 to 424; these read VSQL…LNTD, LEQS…MSQE, and EVEL…QQKQ. Over residues 121–139 the composition is skewed to basic and acidic residues; that stretch reads QVEHQLEEEKKANNEKQKA. Disordered regions lie at residues 356–376, 434–461, 508–549, and 600–624; these read LREQEERLQEQQERLPEQEER, ALPGEGDGGGHLDSEGEEAPRPIPSIPQ, PITK…GVAA, and PVQGEAREGSPHDNPTAQPIVQDHQ. The span at 441 to 453 shows a compositional bias: basic and acidic residues; that stretch reads GGGHLDSEGEEAP. Residues 521–534 are compositionally biased toward gly residues; that stretch reads PGGGHHQAGPGQGG.

It belongs to the GOLGA8 family.

This is Golgin subfamily A member 8G from Homo sapiens (Human).